We begin with the raw amino-acid sequence, 159 residues long: Aphid transmission protein (159 aa).

It belongs to the caulimoviridae ORF II family.

Its function is as follows. This protein is involved in virus transmission. The sequence is that of Aphid transmission protein from Cauliflower mosaic virus (strain NY8153) (CaMV).